A 796-amino-acid chain; its full sequence is Endonuclease MutS2 (796 aa).

339-346 (GPNTGGKT) contacts ATP. Residues 620–644 (EKLGDTDSSLVSKAKKNRKQHKPSD) are disordered. The region spanning 721–796 (LNIIGKRVDE…DHGVTIVEFK (76 aa)) is the Smr domain.

The protein belongs to the DNA mismatch repair MutS family. MutS2 subfamily. As to quaternary structure, homodimer. Binds to stalled ribosomes, contacting rRNA.

Functionally, endonuclease that is involved in the suppression of homologous recombination and thus may have a key role in the control of bacterial genetic diversity. In terms of biological role, acts as a ribosome collision sensor, splitting the ribosome into its 2 subunits. Detects stalled/collided 70S ribosomes which it binds and splits by an ATP-hydrolysis driven conformational change. Acts upstream of the ribosome quality control system (RQC), a ribosome-associated complex that mediates the extraction of incompletely synthesized nascent chains from stalled ribosomes and their subsequent degradation. Probably generates substrates for RQC. This chain is Endonuclease MutS2, found in Lachnoclostridium phytofermentans (strain ATCC 700394 / DSM 18823 / ISDg) (Clostridium phytofermentans).